Consider the following 117-residue polypeptide: Large ribosomal subunit protein eL34 (117 aa).

Belongs to the eukaryotic ribosomal protein eL34 family. In terms of assembly, component of the large ribosomal subunit.

It is found in the cytoplasm. Its subcellular location is the cytosol. The protein localises to the endoplasmic reticulum. Component of the large ribosomal subunit. The ribosome is a large ribonucleoprotein complex responsible for the synthesis of proteins in the cell. This Ictalurus punctatus (Channel catfish) protein is Large ribosomal subunit protein eL34 (rpl34).